Here is a 230-residue protein sequence, read N- to C-terminus: Heptaprenylglyceryl phosphate synthase (230 aa).

K12 is a sn-glycerol 1-phosphate binding site. Mg(2+) contacts are provided by D14 and T40. Residues 159–164 (YIEYSG), G189, and 209–210 (GD) each bind sn-glycerol 1-phosphate.

Belongs to the GGGP/HepGP synthase family. Group I subfamily. In terms of assembly, homodimer. It depends on Mg(2+) as a cofactor.

It carries out the reaction sn-glycerol 1-phosphate + all-trans-heptaprenyl diphosphate = 3-heptaprenyl-sn-glycero-1-phosphate + diphosphate. It functions in the pathway membrane lipid metabolism; glycerophospholipid metabolism. Its function is as follows. Prenyltransferase that catalyzes in vivo the transfer of the heptaprenyl moiety of heptaprenyl pyrophosphate (HepPP; 35 carbon atoms) to the C3 hydroxyl of sn-glycerol-1-phosphate (G1P), producing heptaprenylglyceryl phosphate (HepGP). This reaction is an ether-bond-formation step in the biosynthesis of archaea-type G1P-based membrane lipids found in Bacillales. The sequence is that of Heptaprenylglyceryl phosphate synthase from Staphylococcus aureus (strain MRSA252).